Here is a 339-residue protein sequence, read N- to C-terminus: UDP-3-O-acylglucosamine N-acyltransferase (339 aa).

The active-site Proton acceptor is H239.

This sequence belongs to the transferase hexapeptide repeat family. LpxD subfamily. Homotrimer.

It carries out the reaction a UDP-3-O-[(3R)-3-hydroxyacyl]-alpha-D-glucosamine + a (3R)-hydroxyacyl-[ACP] = a UDP-2-N,3-O-bis[(3R)-3-hydroxyacyl]-alpha-D-glucosamine + holo-[ACP] + H(+). It participates in bacterial outer membrane biogenesis; LPS lipid A biosynthesis. Catalyzes the N-acylation of UDP-3-O-acylglucosamine using 3-hydroxyacyl-ACP as the acyl donor. Is involved in the biosynthesis of lipid A, a phosphorylated glycolipid that anchors the lipopolysaccharide to the outer membrane of the cell. The sequence is that of UDP-3-O-acylglucosamine N-acyltransferase from Aliivibrio fischeri (strain ATCC 700601 / ES114) (Vibrio fischeri).